We begin with the raw amino-acid sequence, 336 residues long: D-alanine--D-alanine ligase (336 aa).

Positions 124 to 330 (KMWFSALGVP…FTEYLIDVIG (207 aa)) constitute an ATP-grasp domain. 154 to 209 (AFDNWGSVFVKAASQGSSVGCYKVDVKANIANVLKDAFSYAPYVVVEQTIHARELE) lines the ATP pocket. The Mg(2+) site is built by Asp-284, Glu-297, and Asn-299.

This sequence belongs to the D-alanine--D-alanine ligase family. Requires Mg(2+) as cofactor. The cofactor is Mn(2+).

It is found in the cytoplasm. The enzyme catalyses 2 D-alanine + ATP = D-alanyl-D-alanine + ADP + phosphate + H(+). It functions in the pathway cell wall biogenesis; peptidoglycan biosynthesis. In terms of biological role, cell wall formation. The protein is D-alanine--D-alanine ligase of Shewanella frigidimarina (strain NCIMB 400).